A 425-amino-acid chain; its full sequence is MLDQRLVRDNPDLIANELGRRGITLDLTGLQLIAQQQRNLEEQRSSLQAEGNRIGKEVGQRIQQGSDPKASDVAELRQQGNLIKQKVAVLEDEEKQLSARLREQLLSLPNLPSPDCPEGRDENDNQERHRWGKPREGKDLLEHWSIAERLKLFETERSVRIAQSRFVTLMGQGARLERALINFMLDLHTSKGYREVMPPVLVNTASLTGSGQLPKFAEESFRCAEDDLWLTPTAEVPVTSLHRDEIIPAEQLPLRYAAYSPCFRREAGSYGRDTRGLIRLHQFNKVELYWFVHPDHSQAAHAQITADAEAVLQALELPYRVIELCTGDLGFSSSRTYDLEVWLPGAGAFREISSCSICGDFQARRSAIRTKDEKGTRLIHTLNGSGLAVGRTMAALLETGQQSDGSVLLPKALVPYFGNDRLEPE.

2 disordered regions span residues 43–69 (QRSS…SDPK) and 108–134 (LPNL…WGKP). A compositionally biased stretch (basic and acidic residues) spans 117–134 (PEGRDENDNQERHRWGKP). 233 to 235 (TAE) lines the L-serine pocket. 264-266 (RRE) is a binding site for ATP. Residue Glu-287 coordinates L-serine. 351–354 (EISS) contacts ATP. Ser-385 lines the L-serine pocket.

The protein belongs to the class-II aminoacyl-tRNA synthetase family. Type-1 seryl-tRNA synthetase subfamily. Homodimer. The tRNA molecule binds across the dimer.

It localises to the cytoplasm. It catalyses the reaction tRNA(Ser) + L-serine + ATP = L-seryl-tRNA(Ser) + AMP + diphosphate + H(+). The enzyme catalyses tRNA(Sec) + L-serine + ATP = L-seryl-tRNA(Sec) + AMP + diphosphate + H(+). It functions in the pathway aminoacyl-tRNA biosynthesis; selenocysteinyl-tRNA(Sec) biosynthesis; L-seryl-tRNA(Sec) from L-serine and tRNA(Sec): step 1/1. Its function is as follows. Catalyzes the attachment of serine to tRNA(Ser). Is also able to aminoacylate tRNA(Sec) with serine, to form the misacylated tRNA L-seryl-tRNA(Sec), which will be further converted into selenocysteinyl-tRNA(Sec). The polypeptide is Serine--tRNA ligase (Prochlorococcus marinus (strain MIT 9313)).